The following is a 254-amino-acid chain: Leucyl/phenylalanyl-tRNA--protein transferase (254 aa).

This sequence belongs to the L/F-transferase family.

It localises to the cytoplasm. It catalyses the reaction N-terminal L-lysyl-[protein] + L-leucyl-tRNA(Leu) = N-terminal L-leucyl-L-lysyl-[protein] + tRNA(Leu) + H(+). The enzyme catalyses N-terminal L-arginyl-[protein] + L-leucyl-tRNA(Leu) = N-terminal L-leucyl-L-arginyl-[protein] + tRNA(Leu) + H(+). It carries out the reaction L-phenylalanyl-tRNA(Phe) + an N-terminal L-alpha-aminoacyl-[protein] = an N-terminal L-phenylalanyl-L-alpha-aminoacyl-[protein] + tRNA(Phe). Its function is as follows. Functions in the N-end rule pathway of protein degradation where it conjugates Leu, Phe and, less efficiently, Met from aminoacyl-tRNAs to the N-termini of proteins containing an N-terminal arginine or lysine. The sequence is that of Leucyl/phenylalanyl-tRNA--protein transferase from Burkholderia lata (strain ATCC 17760 / DSM 23089 / LMG 22485 / NCIMB 9086 / R18194 / 383).